Consider the following 453-residue polypeptide: tRNA modification GTPase MnmE (453 aa).

Positions 22, 79, and 119 each coordinate (6S)-5-formyl-5,6,7,8-tetrahydrofolate. Positions 215–376 (GMKVVIAGRP…LKQHLKSLMG (162 aa)) constitute a TrmE-type G domain. N225 is a K(+) binding site. Residues 225–230 (NAGKSS), 244–250 (TEIAGTT), 269–272 (DTAG), and 334–337 (NKAD) each bind GTP. S229 serves as a coordination point for Mg(2+). 3 residues coordinate K(+): T244, I246, and T249. T250 provides a ligand contact to Mg(2+). K453 lines the (6S)-5-formyl-5,6,7,8-tetrahydrofolate pocket.

The protein belongs to the TRAFAC class TrmE-Era-EngA-EngB-Septin-like GTPase superfamily. TrmE GTPase family. Homodimer. Heterotetramer of two MnmE and two MnmG subunits. K(+) serves as cofactor.

The protein localises to the cytoplasm. Its function is as follows. Exhibits a very high intrinsic GTPase hydrolysis rate. Involved in the addition of a carboxymethylaminomethyl (cmnm) group at the wobble position (U34) of certain tRNAs, forming tRNA-cmnm(5)s(2)U34. The chain is tRNA modification GTPase MnmE from Shewanella pealeana (strain ATCC 700345 / ANG-SQ1).